Consider the following 181-residue polypeptide: Nedd8-conjugating enzyme UbcE2M (181 aa).

2 interaction with Uba3 regions span residues 4 to 7 (LFTL) and 24 to 54 (ASAAQLRIQKDINELNLPNTCATDFPDPNDL). The region spanning 26–170 (AAQLRIQKDI…VKKAMRGGCV (145 aa)) is the UBC core domain. Cysteine 108 acts as the Glycyl thioester intermediate in catalysis.

Belongs to the ubiquitin-conjugating enzyme family. UBC12 subfamily. Interacts with Uba3. Expressed in the wing disk.

It carries out the reaction [E1 NEDD8-activating enzyme]-S-[NEDD8 protein]-yl-L-cysteine + [E2 NEDD8-conjugating enzyme]-L-cysteine = [E1 NEDD8-activating enzyme]-L-cysteine + [E2 NEDD8-conjugating enzyme]-S-[NEDD8-protein]-yl-L-cysteine.. It functions in the pathway protein modification; protein neddylation. Its function is as follows. Accepts the ubiquitin-like protein Nedd8 from the Uba3-APP-BP1 E1 complex and catalyzes its covalent attachment to other proteins. Required for Cul1 and Cul3 neddylation. Negatively regulates full-length ci stability and hedgehog signaling. In Drosophila melanogaster (Fruit fly), this protein is Nedd8-conjugating enzyme UbcE2M.